The primary structure comprises 637 residues: MNTGIIDLFDNHVDSIPTILPHQLATLDYLVRTIIDENRSVLLFHIMGSGKTIIALLFALVASRFKKVYILVPNINILKIFNYNMGVAMNLFNDEFIAENIFIHSTTGFYSLNYNDNVINYNGLSRYNNSIFIVDEAHNIFGNNTGELMTVIKNKNKIPFLLLSGSPITNTPNTLGHIIDLMSEETIDFGEIISRGKKVIQTLLNERGVNVLKDLLKGRISYYEMPDKDLPTIRYHGRKFLDTRVVYCHMSKLQERDYMITRRQLCYHEMFDKNMYNVSMAVLGQLNLMNNLDTLFQEQDKELYPNLKINNGVLYGEELVTLNISSKFKYFINRIQTLNGKHFIYFSNSTYGGLVIKYIMLSNGYSEYNGSQGTNPHMINGKPKTFAIVTSKMKSSLEDLLDVYNSPENDDGSQLMFLFSSNIMSESYTLKEVRHIWFMTIPDTFSQYNQILGRSIRKFSYADISEPVNVYLLAAVYSDFNDEVTSLNDYTQDELINVLPFDIKKLLYLKFKTKETNRIYSILQEMSETYSLPPHPSIVKVLLGELVRQFFYNNSRIKYNDSKLLKMVTSVIKNKEDARNYIDDIVNGHFFVSNKVFDKSLLYKYENDIITVPFRLSYEPFVWGVNFRKEYNVVSSP.

Residues R32–E185 enclose the Helicase ATP-binding domain. Position 45–52 (H45–T52) interacts with ATP. The DEXH box signature appears at D135–H138. The Helicase C-terminal domain maps to K327–L507.

Belongs to the helicase family. VETF subfamily. As to quaternary structure, heterodimer of a 70 kDa and a 82 kDa subunit. Part of the early transcription complex composed of ETF, RAP94/OPG109, and the DNA-directed RNA polymerase.

It is found in the virion. Acts with RNA polymerase to initiate transcription from early gene promoters. Is recruited by the RPO-associated protein of 94 kDa RAP94/OPG109 to form the early transcription complex, which also contains the core RNA polymerase. ETF heterodimer binds to early gene promoters. In Homo sapiens (Human), this protein is Early transcription factor 70 kDa subunit (OPG118).